A 123-amino-acid chain; its full sequence is Small ribosomal subunit protein uS12 (123 aa).

Positions 1–28 are disordered; the sequence is MPTIQQLIRKPRQPKVKRSKSQHLESCP. The span at 9–21 shows a compositional bias: basic residues; the sequence is RKPRQPKVKRSKS. Aspartate 89 is modified (3-methylthioaspartic acid).

It belongs to the universal ribosomal protein uS12 family. In terms of assembly, part of the 30S ribosomal subunit. Contacts proteins S8 and S17. May interact with IF1 in the 30S initiation complex.

Functionally, with S4 and S5 plays an important role in translational accuracy. Its function is as follows. Interacts with and stabilizes bases of the 16S rRNA that are involved in tRNA selection in the A site and with the mRNA backbone. Located at the interface of the 30S and 50S subunits, it traverses the body of the 30S subunit contacting proteins on the other side and probably holding the rRNA structure together. The combined cluster of proteins S8, S12 and S17 appears to hold together the shoulder and platform of the 30S subunit. This is Small ribosomal subunit protein uS12 from Dinoroseobacter shibae (strain DSM 16493 / NCIMB 14021 / DFL 12).